The primary structure comprises 159 residues: ATP synthase subunit b (159 aa).

The chain crosses the membrane as a helical span at residues 2 to 22 (NISIPQIIAAILNFIILLLIV).

Belongs to the ATPase B chain family. F-type ATPases have 2 components, F(1) - the catalytic core - and F(0) - the membrane proton channel. F(1) has five subunits: alpha(3), beta(3), gamma(1), delta(1), epsilon(1). F(0) has three main subunits: a(1), b(2) and c(10-14). The alpha and beta chains form an alternating ring which encloses part of the gamma chain. F(1) is attached to F(0) by a central stalk formed by the gamma and epsilon chains, while a peripheral stalk is formed by the delta and b chains.

It is found in the cell membrane. Functionally, f(1)F(0) ATP synthase produces ATP from ADP in the presence of a proton or sodium gradient. F-type ATPases consist of two structural domains, F(1) containing the extramembraneous catalytic core and F(0) containing the membrane proton channel, linked together by a central stalk and a peripheral stalk. During catalysis, ATP synthesis in the catalytic domain of F(1) is coupled via a rotary mechanism of the central stalk subunits to proton translocation. In terms of biological role, component of the F(0) channel, it forms part of the peripheral stalk, linking F(1) to F(0). This Clostridium botulinum (strain Okra / Type B1) protein is ATP synthase subunit b.